The following is a 75-amino-acid chain: Putative sulfur carrier protein YrkI (75 aa).

The Cysteine persulfide intermediate role is filled by Cys14.

This sequence belongs to the sulfur carrier protein TusA family.

This is Putative sulfur carrier protein YrkI (yrkI) from Bacillus subtilis (strain 168).